The chain runs to 336 residues: MALRLITRFRGLNIPQRSLHQSTFRLNETIQSTTTTTTTTTTTTTSDEIPTTKPRFQSRFRRNQQPHQQQRSPYTSSQVTENLNIGEINRVRTVPTLMTYYGGNPVHEDNMNRLRAVLKKYQQLPVRVVPDREIQSQKFIGFDDYLEKTQSGTRVKKIHYRELITLLNRLRTIDLELMPLEVSEILSEYTSKSVSKIVQLSREKTLDCFGRAKTQAKRKSSIAKIYLVKGEGEVLVNGKSLIEFFPNIYARKNLLYPFQVVEQEGKYNVFAQVTGGGYTGQSEAIMYAIAKALVVFNPLLKPRLSKAGLMKSDTRIVERKKPGKVKARKSPTWVKR.

The disordered stretch occupies residues S32–E81. Residues T33–T45 are compositionally biased toward low complexity. Residues Q65–E81 show a composition bias toward polar residues.

This sequence belongs to the universal ribosomal protein uS9 family. Component of the mitochondrial small ribosomal subunit (mt-SSU).

Its subcellular location is the mitochondrion. Component of the mitochondrial ribosome (mitoribosome), a dedicated translation machinery responsible for the synthesis of mitochondrial genome-encoded proteins, including at least some of the essential transmembrane subunits of the mitochondrial respiratory chain. The mitoribosomes are attached to the mitochondrial inner membrane and translation products are cotranslationally integrated into the membrane. In Candida albicans (strain SC5314 / ATCC MYA-2876) (Yeast), this protein is Small ribosomal subunit protein uS9m (MRPS9).